Consider the following 343-residue polypeptide: Delta(1)-pyrroline-2-carboxylate/Delta(1)-piperideine-2-carboxylate reductase (343 aa).

The active-site Charge relay system is the Ser-53. Residue His-54 is the Proton donor of the active site. Arg-58 lines the substrate pocket. 126-130 lines the NADP(+) pocket; that stretch reads HFAAL. Thr-166 contributes to the substrate binding site. Position 184–186 (184–186) interacts with NADP(+); sequence DLA. 192–193 contacts substrate; that stretch reads HG. Residue Asp-194 is the Charge relay system of the active site. NADP(+) contacts are provided by residues 236–237 and 309–315; these read HK and RLPGDRR.

This sequence belongs to the LDH2/MDH2 oxidoreductase family. Homodimer.

It catalyses the reaction L-pipecolate + NADP(+) = Delta(1)-piperideine-2-carboxylate + NADPH + H(+). The catalysed reaction is L-proline + NADP(+) = 1-pyrroline-2-carboxylate + NADPH + H(+). It carries out the reaction N-methyl-L-alanine + NADP(+) + H2O = methylamine + pyruvate + NADPH + H(+). With respect to regulation, is inhibited by the substrate analog pyrrole-2-carboxylate, and by 2-picolinate. In terms of biological role, catalyzes the reduction of both Delta(1)-pyrroline-2-carboxylate (Pyr2C) and Delta(1)-piperideine-2-carboxylate (Pip2C) to L-proline and L-pipecolate, respectively, using NADPH as the electron donor. Can catalyze the reverse oxidation reactions, albeit at a much lower rate. Is also able to catalyze in vitro the NADPH-dependent formation of N-methylalanine from pyruvate and N-methylamine; can act on other alpha-keto acids and specifically uses methylamine and not ammonia for these reductive amination reactions. Can use NADH instead of NADPH, although with much less efficiency. This is Delta(1)-pyrroline-2-carboxylate/Delta(1)-piperideine-2-carboxylate reductase from Pseudomonas syringae pv. tomato.